The sequence spans 618 residues: Membrane protein insertase YidC (618 aa).

A run of 6 helical transmembrane segments spans residues 3 to 23 (KNTI…SFLS), 363 to 383 (WGLS…IVVF), 439 to 459 (LPML…PSAI), 478 to 498 (FITF…FCLL), 520 to 540 (PQMA…LFVL), and 545 to 565 (SGLN…MIIL).

Belongs to the OXA1/ALB3/YidC family. Type 1 subfamily. Interacts with the Sec translocase complex via SecD. Specifically interacts with transmembrane segments of nascent integral membrane proteins during membrane integration.

It is found in the cell membrane. Functionally, required for the insertion and/or proper folding and/or complex formation of integral membrane proteins into the membrane. Involved in integration of membrane proteins that insert both dependently and independently of the Sec translocase complex, as well as at least some lipoproteins. Aids folding of multispanning membrane proteins. In Bacteroides fragilis (strain YCH46), this protein is Membrane protein insertase YidC.